We begin with the raw amino-acid sequence, 143 residues long: Nucleoside diphosphate kinase (143 aa).

ATP contacts are provided by Lys11, Phe59, Arg87, Thr93, Arg104, and Asn114. His117 functions as the Pros-phosphohistidine intermediate in the catalytic mechanism.

It belongs to the NDK family. In terms of assembly, homotetramer. The cofactor is Mg(2+).

The protein localises to the cytoplasm. The catalysed reaction is a 2'-deoxyribonucleoside 5'-diphosphate + ATP = a 2'-deoxyribonucleoside 5'-triphosphate + ADP. It carries out the reaction a ribonucleoside 5'-diphosphate + ATP = a ribonucleoside 5'-triphosphate + ADP. In terms of biological role, major role in the synthesis of nucleoside triphosphates other than ATP. The ATP gamma phosphate is transferred to the NDP beta phosphate via a ping-pong mechanism, using a phosphorylated active-site intermediate. In Cronobacter sakazakii (strain ATCC BAA-894) (Enterobacter sakazakii), this protein is Nucleoside diphosphate kinase.